A 422-amino-acid polypeptide reads, in one-letter code: Serine hydroxymethyltransferase (422 aa).

(6S)-5,6,7,8-tetrahydrofolate contacts are provided by residues L121 and 125-127 (GHL). K230 is subject to N6-(pyridoxal phosphate)lysine. 355-357 (SPF) contributes to the (6S)-5,6,7,8-tetrahydrofolate binding site.

Belongs to the SHMT family. Homodimer. Pyridoxal 5'-phosphate serves as cofactor.

It is found in the cytoplasm. The enzyme catalyses (6R)-5,10-methylene-5,6,7,8-tetrahydrofolate + glycine + H2O = (6S)-5,6,7,8-tetrahydrofolate + L-serine. The protein operates within one-carbon metabolism; tetrahydrofolate interconversion. It functions in the pathway amino-acid biosynthesis; glycine biosynthesis; glycine from L-serine: step 1/1. Catalyzes the reversible interconversion of serine and glycine with tetrahydrofolate (THF) serving as the one-carbon carrier. This reaction serves as the major source of one-carbon groups required for the biosynthesis of purines, thymidylate, methionine, and other important biomolecules. Also exhibits THF-independent aldolase activity toward beta-hydroxyamino acids, producing glycine and aldehydes, via a retro-aldol mechanism. This Teredinibacter turnerae (strain ATCC 39867 / T7901) protein is Serine hydroxymethyltransferase.